Here is a 283-residue protein sequence, read N- to C-terminus: Putative transposase InsK for insertion sequence element IS150 (283 aa).

The region spanning 117-279 (KATRPNEKWV…TPIEYRNQTY (163 aa)) is the Integrase catalytic domain.

The protein belongs to the transposase IS3/IS150/IS904 family.

Its function is as follows. Involved in the transposition of the insertion sequence IS150. This is Putative transposase InsK for insertion sequence element IS150 (insK) from Escherichia coli (strain K12).